Reading from the N-terminus, the 285-residue chain is uncharacterized protein (285 aa).

A signal peptide spans 1–25 (MVKKWLIQFAVMLSVLSTFTYSASA).

This is an uncharacterized protein from Bacillus subtilis (strain 168).